The primary structure comprises 651 residues: E3 SUMO-protein ligase PIAS1 (651 aa).

N-acetylalanine is present on Ala-2. Residues 2–200 are required for interaction with MSX1; it reads ADSAELKQMV…KCDFTVQVQL (199 aa). Residues 11–45 enclose the SAP domain; that stretch reads VMSLRVSELQVLLGYAGRNKHGRKHELLTKALHLL. The short motif at 19-23 is the LXXLL motif element; it reads LQVLL. Glycyl lysine isopeptide (Lys-Gly) (interchain with G-Cter in SUMO2) cross-links involve residues Lys-40 and Lys-46. Positions 56–64 match the Nuclear localization signal motif; that stretch reads KIKELYRRR. Positions 124-288 constitute a PINIT domain; the sequence is HLTSALHPVH…SMAVYLVKQL (165 aa). Residues Lys-137 and Lys-238 each participate in a glycyl lysine isopeptide (Lys-Gly) (interchain with G-Cter in SUMO2) cross-link. An SP-RING-type zinc finger spans residues 320–405; the sequence is PDSEIATTSL…LKYCTDCDEI (86 aa). Positions 351, 353, 374, and 377 each coordinate Zn(2+). Residues 368–380 carry the Nuclear localization signal motif; sequence KKPTWVCPVCDKK. Lys-453 is covalently cross-linked (Glycyl lysine isopeptide (Lys-Gly) (interchain with G-Cter in SUMO2)). The SUMO1-binding stretch occupies residues 462-473; sequence LTIDSSSDEEEE. The interval 465–511 is disordered; that stretch reads DSSSDEEEEEPSAKRTCPSLSPTSPLNNKGILSLPHQASPVSRTPSL. 4 positions are modified to phosphoserine: Ser-467, Ser-468, Ser-483, and Ser-485. The span at 482 to 491 shows a compositional bias: polar residues; that stretch reads PSLSPTSPLN. Thr-487 is subject to Phosphothreonine. Ser-488 is subject to Phosphoserine. Residue Lys-493 forms a Glycyl lysine isopeptide (Lys-Gly) (interchain with G-Cter in SUMO2) linkage. Residues Ser-503, Ser-510, and Ser-522 each carry the phosphoserine modification. Repeat copies occupy residues 520–523 and 557–560. Positions 520-615 are 4 X 4 AA repeats of N-T-S-L; it reads NTSLIQDYRH…GSSSGSNSSL (96 aa). The 3; approximate repeat unit spans residues 598–601; the sequence is STSL. A compositionally biased stretch (low complexity) spans 599-621; it reads TSLPTTNGSSSGSNSSLVSSNSL. The segment at 599-632 is disordered; sequence TSLPTTNGSSSGSNSSLVSSNSLRESHSHTVTNR. A 4; approximate repeat occupies 612–615; sequence NSSL.

It belongs to the PIAS family. In terms of assembly, interacts with NCOA2 and AR. Interacts with NR2C1; the interaction promotes its sumoylation. Interacts with DDX21, CSRP2, AXIN1, JUN, UBE2I, SUMO1, SATB2, PLAG1, TP53 and STAT1 (dimer), following IFNA1-stimulation. Interacts with SP3 (preferentially when SUMO-modified). Interacts with KLF8; the interaction results in SUMO ligation and repression of KLF8 transcriptional activity and of its cell cycle progression into G(1) phase. Interacts with CHUK/IKKA; this interaction induces PIAS1 phosphorylation. Interacts with PTK2/FAK1; the interaction promotes its sumoylation. Interacts with DDX5. Interacts with PML. Interacts with MTA1. Interacts with SUMO1P1/SUMO5. Interacts with PRDM1/Blimp-1. Interacts (via N-terminus) with MSX1 (via C-terminus); the interaction is required for the localization of both proteins to the nuclear periphery and specific binding of MSX1 to the core enhancer region in target gene promoters. (Microbial infection) Interacts with ebolavirus VP35; this interaction mediates the sumoylation of IRF7 and contributes to the viral inhibition of IFN-type I production. Post-translationally, sumoylated. As to expression, expressed in numerous tissues with highest level in testis.

The protein resides in the nucleus. Its subcellular location is the nucleus speckle. It localises to the PML body. The protein localises to the cytoplasm. It is found in the cytoskeleton. Its pathway is protein modification; protein sumoylation. In terms of biological role, functions as an E3-type small ubiquitin-like modifier (SUMO) ligase, stabilizing the interaction between UBE2I and the substrate, and as a SUMO-tethering factor. Catalyzes sumoylation of various proteins, such as CEBPB, MRE11, MTA1, PTK2 and PML. Plays a crucial role as a transcriptional coregulation in various cellular pathways, including the STAT pathway, the p53 pathway and the steroid hormone signaling pathway. In vitro, binds A/T-rich DNA. The effects of this transcriptional coregulation, transactivation or silencing, may vary depending upon the biological context. Mediates sumoylation of MRE11, stabilizing MRE11 on chromatin during end resection. Sumoylates PML (at 'Lys-65' and 'Lys-160') and PML-RAR and promotes their ubiquitin-mediated degradation. PIAS1-mediated sumoylation of PML promotes its interaction with CSNK2A1/CK2 which in turn promotes PML phosphorylation and degradation. Enhances the sumoylation of MTA1 and may participate in its paralog-selective sumoylation. Plays a dynamic role in adipogenesis by promoting the SUMOylation and degradation of CEBPB. Mediates the nuclear mobility and localization of MSX1 to the nuclear periphery, whereby MSX1 is brought into the proximity of target myoblast differentiation factor genes. Also required for the binding of MSX1 to the core enhancer region in target gene promoter regions, independent of its sumoylation activity. Capable of binding to the core enhancer region TAAT box in the MYOD1 gene promoter. Its function is as follows. (Microbial infection) Restricts Epstein-Barr virus (EBV) lytic replication by acting as an inhibitor for transcription factors involved in lytic gene expression. The virus can use apoptotic caspases to antagonize PIAS1-mediated restriction and express its lytic genes. In Homo sapiens (Human), this protein is E3 SUMO-protein ligase PIAS1 (PIAS1).